The sequence spans 309 residues: MVYFLPIIFSILVVFAFVLGNFSNGFIALVNVIDWVKRQKISSADQILTALVVSRVGLLWVILLHWYANVFNSALYSLEVRIVASNISAVINHFSIWLAASLSIFYLLKIANFSNLIFLHLKKRIKSVVLVILLGPLVFLICNLAVITMDERVWTKEYEGNVTWKIKLRNAIHLSSLTVTTLANLIPFTLSLICFLLLICSLCKHLKKMQLHSKGSQDPSTKVHIKALQTVISFLMLCAIYFLSIMISVWNLRSLENKPVFMFCKAIRFSYPSIHPFILIWGNKKLKQTFLSVFWQVRYWVKGEKPSSP.

A topological domain (extracellular) is located at residue M1. Residues 2–22 (VYFLPIIFSILVVFAFVLGNF) form a helical membrane-spanning segment. Residues 23–46 (SNGFIALVNVIDWVKRQKISSADQ) lie on the Cytoplasmic side of the membrane. Residues 47–67 (ILTALVVSRVGLLWVILLHWY) form a helical membrane-spanning segment. The Extracellular portion of the chain corresponds to 68–86 (ANVFNSALYSLEVRIVASN). N86 carries an N-linked (GlcNAc...) asparagine glycan. A helical transmembrane segment spans residues 87-107 (ISAVINHFSIWLAASLSIFYL). Over 108 to 127 (LKIANFSNLIFLHLKKRIKS) the chain is Cytoplasmic. Residues 128–148 (VVLVILLGPLVFLICNLAVIT) traverse the membrane as a helical segment. Topologically, residues 149-181 (MDERVWTKEYEGNVTWKIKLRNAIHLSSLTVTT) are extracellular. An N-linked (GlcNAc...) asparagine glycan is attached at N161. A helical transmembrane segment spans residues 182-202 (LANLIPFTLSLICFLLLICSL). Topologically, residues 203-229 (CKHLKKMQLHSKGSQDPSTKVHIKALQ) are cytoplasmic. The chain crosses the membrane as a helical span at residues 230 to 250 (TVISFLMLCAIYFLSIMISVW). Over 251–259 (NLRSLENKP) the chain is Extracellular. Residues 260–280 (VFMFCKAIRFSYPSIHPFILI) form a helical membrane-spanning segment. At 281-309 (WGNKKLKQTFLSVFWQVRYWVKGEKPSSP) the chain is on the cytoplasmic side.

It belongs to the G-protein coupled receptor T2R family.

The protein localises to the membrane. Functionally, putative taste receptor which may play a role in the perception of bitterness. The polypeptide is Putative taste receptor type 2 member 33 (Homo sapiens (Human)).